A 435-amino-acid chain; its full sequence is Cell adhesion molecule 2 (435 aa).

A signal peptide spans 1–24 (MIWKRSAVLRFYSVCGLLLQGSQG). The Extracellular segment spans residues 25–367 (QFPLTQNVTV…ALAGQNGPDH (343 aa)). The region spanning 27 to 119 (PLTQNVTVVE…PVKTSKAYLT (93 aa)) is the Ig-like V-type domain. N31 and N51 each carry an N-linked (GlcNAc...) asparagine glycan. Disulfide bonds link C44–C104, C146–C203, and C248–C296. Ig-like C2-type domains are found at residues 127–219 (PQIS…VAMQ) and 227–312 (PSVK…YVLI). N291 carries N-linked (GlcNAc...) asparagine glycosylation. Residues 368-388 (ALIGGIVAVVVFVTLCSIFLL) form a helical membrane-spanning segment. At 389 to 435 (GRYLARHKGTYLTNEAKGAEDAPDADTAIINAEGSQVNAEEKKEYFI) the chain is on the cytoplasmic side. A Phosphoserine modification is found at S423.

It belongs to the nectin family.

The protein resides in the cell membrane. It localises to the synapse. The protein localises to the cell projection. Its subcellular location is the axon. In terms of biological role, adhesion molecule that engages in homo- and heterophilic interactions with the other nectin-like family members, leading to cell aggregation. Important for synapse organization, providing regulated trans-synaptic adhesion. Preferentially binds to oligodendrocytes. Its function is as follows. (Microbial infection) Induces cell fusion in neuron infected by a neuropathogenic strain of measles. Interacts with measles hemagglutinin to trigger hyperfusogenic F-mediated membrane fusion and presumably transsynaptic cell-to-cell transmission of the virus. This is Cell adhesion molecule 2 (CADM2) from Homo sapiens (Human).